A 131-amino-acid polypeptide reads, in one-letter code: Translation initiation factor 5A (131 aa).

A Hypusine modification is found at Lys-36.

This sequence belongs to the eIF-5A family.

The protein localises to the cytoplasm. In terms of biological role, functions by promoting the formation of the first peptide bond. The polypeptide is Translation initiation factor 5A (eIF5A) (Saccharolobus islandicus (strain Y.N.15.51 / Yellowstone #2) (Sulfolobus islandicus)).